A 330-amino-acid polypeptide reads, in one-letter code: Phenylalanine--tRNA ligase alpha subunit (330 aa).

Glu-246 lines the Mg(2+) pocket.

Belongs to the class-II aminoacyl-tRNA synthetase family. Phe-tRNA synthetase alpha subunit type 1 subfamily. In terms of assembly, tetramer of two alpha and two beta subunits. Mg(2+) is required as a cofactor.

It localises to the cytoplasm. It catalyses the reaction tRNA(Phe) + L-phenylalanine + ATP = L-phenylalanyl-tRNA(Phe) + AMP + diphosphate + H(+). This chain is Phenylalanine--tRNA ligase alpha subunit, found in Campylobacter jejuni subsp. doylei (strain ATCC BAA-1458 / RM4099 / 269.97).